The chain runs to 851 residues: Meiotically up-regulated gene 87 protein (851 aa).

Belongs to the nucleoporin interacting component (NIC) family.

The protein resides in the nucleus envelope. In terms of biological role, has a role in meiosis. The sequence is that of Meiotically up-regulated gene 87 protein (mug87) from Schizosaccharomyces pombe (strain 972 / ATCC 24843) (Fission yeast).